A 959-amino-acid chain; its full sequence is Kinesin-like protein NACK1 (959 aa).

The disordered stretch occupies residues 1–28 (MTVRTPGTPASKIDKTPATTPNGHRGRE). In terms of domain architecture, Kinesin motor spans 30 to 353 (KIVVTVRLRP…LYFATRAKEV (324 aa)). ATP is bound at residue 117–124 (GQTSSGKT). Threonine 145 bears the Phosphothreonine mark. A coiled-coil region spans residues 362–429 (VVSDKQLVKH…LRRKLQEEQG (68 aa)). Disordered stretches follow at residues 417–438 (VDEL…SVSP), 451–473 (SPNL…GRQS), 598–640 (LPSN…FLKS), and 658–700 (NRAP…SVNM). 2 stretches are compositionally biased toward basic and acidic residues: residues 418–429 (DELRRKLQEEQG) and 454–466 (LEEK…ERTR). The stretch at 557-598 (KSVSANLKEEIARLHSQGSTIADLEEQLENVQKSLDKLVMSL) forms a coiled coil. Over residues 600-611 (SNNDQQSNNDTT) the composition is skewed to low complexity. Residues 613–623 (KAKHPSKKKKL) are compositionally biased toward basic residues. Positions 630–640 (NSINRQNFLKS) are enriched in polar residues. Phosphothreonine is present on residues threonine 675 and threonine 690. Positions 685–756 (SSKEGTPYRR…EANEAAGYNL (72 aa)) are required for the binding to NPK1.

It belongs to the TRAFAC class myosin-kinesin ATPase superfamily. Kinesin family. KIN-7 subfamily. As to quaternary structure, interacts (via C-terminus) with NPK1 (via C-terminus). Post-translationally, phosphorylated at Thr-145, Thr-675 and Thr-690 by CDKAs and CDKBs. The phosphorylation occurs before metaphase and inhibits the interaction with NPK1 preventing the transition to cytokinesis.

It is found in the cytoplasm. Its subcellular location is the nucleus. The protein resides in the cytoskeleton. It localises to the phragmoplast. Its function is as follows. Probable plus end-directed motor protein that functions in the NACK-PQR (NPK1-NQK1/MEK1-NRK1) MAP kinase signaling pathway, which is essential for somatic cell cytokinesis, especially for the cell-plate formation and its expansion. Regulates the activity and the localization of NPK1 by association through the non-catalytic region of the kinase. In Nicotiana tabacum (Common tobacco), this protein is Kinesin-like protein NACK1 (NACK1).